The following is a 416-amino-acid chain: D-amino acid dehydrogenase (416 aa).

Position 3-17 (3-17 (VTILGAGVIGVTTAY)) interacts with FAD.

It belongs to the DadA oxidoreductase family. FAD is required as a cofactor.

The enzyme catalyses a D-alpha-amino acid + A + H2O = a 2-oxocarboxylate + AH2 + NH4(+). Its pathway is amino-acid degradation; D-alanine degradation; NH(3) and pyruvate from D-alanine: step 1/1. Functionally, oxidative deamination of D-amino acids. The polypeptide is D-amino acid dehydrogenase (Rhizobium rhizogenes (strain K84 / ATCC BAA-868) (Agrobacterium radiobacter)).